The primary structure comprises 187 residues: Translation machinery-associated protein 22 (187 aa).

Residues 94–165 form the SUI1 domain; sequence VTIKRIERNK…EIEEFILEKY (72 aa).

Belongs to the DENR family. As to quaternary structure, interacts with the 40S ribosomal subunit.

It is found in the cytoplasm. The chain is Translation machinery-associated protein 22 (tma-22) from Neurospora crassa (strain ATCC 24698 / 74-OR23-1A / CBS 708.71 / DSM 1257 / FGSC 987).